The chain runs to 441 residues: Serine--tRNA ligase (441 aa).

250 to 252 (TSE) serves as a coordination point for L-serine. ATP-binding positions include 281–283 (RRE) and Val297. Glu304 provides a ligand contact to L-serine. 368–371 (EIVS) contributes to the ATP binding site. Thr402 provides a ligand contact to L-serine.

It belongs to the class-II aminoacyl-tRNA synthetase family. Type-1 seryl-tRNA synthetase subfamily. In terms of assembly, homodimer. The tRNA molecule binds across the dimer.

It localises to the cytoplasm. The catalysed reaction is tRNA(Ser) + L-serine + ATP = L-seryl-tRNA(Ser) + AMP + diphosphate + H(+). It carries out the reaction tRNA(Sec) + L-serine + ATP = L-seryl-tRNA(Sec) + AMP + diphosphate + H(+). The protein operates within aminoacyl-tRNA biosynthesis; selenocysteinyl-tRNA(Sec) biosynthesis; L-seryl-tRNA(Sec) from L-serine and tRNA(Sec): step 1/1. Its function is as follows. Catalyzes the attachment of serine to tRNA(Ser). Is also able to aminoacylate tRNA(Sec) with serine, to form the misacylated tRNA L-seryl-tRNA(Sec), which will be further converted into selenocysteinyl-tRNA(Sec). This Thermoplasma volcanium (strain ATCC 51530 / DSM 4299 / JCM 9571 / NBRC 15438 / GSS1) protein is Serine--tRNA ligase.